The following is a 245-amino-acid chain: Fibroblast growth factor 13 (245 aa).

The disordered stretch occupies residues 1 to 36; it reads MAAAIASSLIRQKRQAREREKSNACKCVSSPSKGKT. Residues 1–62 form a mediates targeting to the nucleus region; the sequence is MAAAIASSLI…GSKKRRRRRP (62 aa). The mediates interaction with sodium channels stretch occupies residues 67–201; the sequence is KGIVTKLYSR…AHFLPKPLKV (135 aa). The residue at position 208 (S208) is a Phosphoserine. The tract at residues 213 to 245 is disordered; sequence TEFSRSGSGTPTKSRSVSGVLNGGKSMSHNEST. A compositionally biased stretch (polar residues) spans 215 to 245; sequence FSRSGSGTPTKSRSVSGVLNGGKSMSHNEST.

The protein belongs to the heparin-binding growth factors family. Interacts with SCN8A; regulates SCN8A activity. Interacts with SCN1A; may regulate SCN1A activity. Interacts with SCN5A; the interaction is direct and may regulate SNC5A density at membranes and function. May also interact with SCN2A and SCN11A. Interacts with MAPK8IP2; may regulate the MAPK8IP2 scaffolding activity. May be phosphorylated. As to expression, ubiquitously expressed. Predominantly expressed in the nervous system.

Its subcellular location is the nucleus. The protein resides in the cytoplasm. It is found in the cell projection. It localises to the filopodium. The protein localises to the growth cone. Its subcellular location is the dendrite. The protein resides in the cell membrane. It is found in the sarcolemma. In terms of biological role, microtubule-binding protein which directly binds tubulin and is involved in both polymerization and stabilization of microtubules. Through its action on microtubules, may participate in the refinement of axons by negatively regulating axonal and leading processes branching. Plays a crucial role in neuron polarization and migration in the cerebral cortex and the hippocampus. Regulates voltage-gated sodium channel transport and function. May also play a role in MAPK signaling. Required for the development of axonal initial segment-targeting inhibitory GABAergic synapses made by chandelier neurons. In Homo sapiens (Human), this protein is Fibroblast growth factor 13.